Here is a 459-residue protein sequence, read N- to C-terminus: Argininosuccinate lyase (459 aa).

Belongs to the lyase 1 family. Argininosuccinate lyase subfamily.

Its subcellular location is the cytoplasm. It carries out the reaction 2-(N(omega)-L-arginino)succinate = fumarate + L-arginine. The protein operates within amino-acid biosynthesis; L-arginine biosynthesis; L-arginine from L-ornithine and carbamoyl phosphate: step 3/3. In Geobacillus thermodenitrificans (strain NG80-2), this protein is Argininosuccinate lyase.